Consider the following 245-residue polypeptide: 1-(5-phosphoribosyl)-5-[(5-phosphoribosylamino)methylideneamino] imidazole-4-carboxamide isomerase 1 (245 aa).

D7 (proton acceptor) is an active-site residue. The active-site Proton donor is the D129.

This sequence belongs to the HisA/HisF family.

The protein localises to the cytoplasm. It carries out the reaction 1-(5-phospho-beta-D-ribosyl)-5-[(5-phospho-beta-D-ribosylamino)methylideneamino]imidazole-4-carboxamide = 5-[(5-phospho-1-deoxy-D-ribulos-1-ylimino)methylamino]-1-(5-phospho-beta-D-ribosyl)imidazole-4-carboxamide. It participates in amino-acid biosynthesis; L-histidine biosynthesis; L-histidine from 5-phospho-alpha-D-ribose 1-diphosphate: step 4/9. This is 1-(5-phosphoribosyl)-5-[(5-phosphoribosylamino)methylideneamino] imidazole-4-carboxamide isomerase 1 (hisA1) from Photorhabdus laumondii subsp. laumondii (strain DSM 15139 / CIP 105565 / TT01) (Photorhabdus luminescens subsp. laumondii).